The primary structure comprises 227 residues: Cytochrome c oxidase subunit 2 (227 aa).

At 1–14 (MAYPMQLGFQDATS) the chain is on the mitochondrial intermembrane side. The helical transmembrane segment at 15-45 (PIMEELLHFHDHTLMIVFLISSLVLYVISLM) threads the bilayer. Topologically, residues 46 to 59 (LTTKLTHTSTMDAQ) are mitochondrial matrix. A helical membrane pass occupies residues 60-87 (EVETIWTILPAIILILIALPSLRILYMM). At 88 to 227 (DEINNPSLTV…YFEKWSASML (140 aa)) the chain is on the mitochondrial intermembrane side. Residues H161, C196, E198, C200, H204, and M207 each contribute to the Cu cation site. E198 provides a ligand contact to Mg(2+). Y218 is subject to Phosphotyrosine.

This sequence belongs to the cytochrome c oxidase subunit 2 family. In terms of assembly, component of the cytochrome c oxidase (complex IV, CIV), a multisubunit enzyme composed of 14 subunits. The complex is composed of a catalytic core of 3 subunits MT-CO1, MT-CO2 and MT-CO3, encoded in the mitochondrial DNA, and 11 supernumerary subunits COX4I, COX5A, COX5B, COX6A, COX6B, COX6C, COX7A, COX7B, COX7C, COX8 and NDUFA4, which are encoded in the nuclear genome. The complex exists as a monomer or a dimer and forms supercomplexes (SCs) in the inner mitochondrial membrane with NADH-ubiquinone oxidoreductase (complex I, CI) and ubiquinol-cytochrome c oxidoreductase (cytochrome b-c1 complex, complex III, CIII), resulting in different assemblies (supercomplex SCI(1)III(2)IV(1) and megacomplex MCI(2)III(2)IV(2)). Found in a complex with TMEM177, COA6, COX18, COX20, SCO1 and SCO2. Interacts with TMEM177 in a COX20-dependent manner. Interacts with COX20. Interacts with COX16. Cu cation is required as a cofactor.

It localises to the mitochondrion inner membrane. It catalyses the reaction 4 Fe(II)-[cytochrome c] + O2 + 8 H(+)(in) = 4 Fe(III)-[cytochrome c] + 2 H2O + 4 H(+)(out). Its function is as follows. Component of the cytochrome c oxidase, the last enzyme in the mitochondrial electron transport chain which drives oxidative phosphorylation. The respiratory chain contains 3 multisubunit complexes succinate dehydrogenase (complex II, CII), ubiquinol-cytochrome c oxidoreductase (cytochrome b-c1 complex, complex III, CIII) and cytochrome c oxidase (complex IV, CIV), that cooperate to transfer electrons derived from NADH and succinate to molecular oxygen, creating an electrochemical gradient over the inner membrane that drives transmembrane transport and the ATP synthase. Cytochrome c oxidase is the component of the respiratory chain that catalyzes the reduction of oxygen to water. Electrons originating from reduced cytochrome c in the intermembrane space (IMS) are transferred via the dinuclear copper A center (CU(A)) of subunit 2 and heme A of subunit 1 to the active site in subunit 1, a binuclear center (BNC) formed by heme A3 and copper B (CU(B)). The BNC reduces molecular oxygen to 2 water molecules using 4 electrons from cytochrome c in the IMS and 4 protons from the mitochondrial matrix. This Rusa unicolor (Sambar) protein is Cytochrome c oxidase subunit 2 (MT-CO2).